A 227-amino-acid chain; its full sequence is ATP-dependent dethiobiotin synthetase BioD (227 aa).

13–18 (DIGKTY) is a binding site for ATP. T17 contacts Mg(2+). K38 is an active-site residue. Position 42 (S42) interacts with substrate. ATP is bound by residues D55, 116-119 (EGSG), and 179-180 (NN). Mg(2+) contacts are provided by D55 and E116.

This sequence belongs to the dethiobiotin synthetase family. As to quaternary structure, homodimer. Requires Mg(2+) as cofactor.

Its subcellular location is the cytoplasm. The catalysed reaction is (7R,8S)-7,8-diammoniononanoate + CO2 + ATP = (4R,5S)-dethiobiotin + ADP + phosphate + 3 H(+). It functions in the pathway cofactor biosynthesis; biotin biosynthesis; biotin from 7,8-diaminononanoate: step 1/2. Its function is as follows. Catalyzes a mechanistically unusual reaction, the ATP-dependent insertion of CO2 between the N7 and N8 nitrogen atoms of 7,8-diaminopelargonic acid (DAPA, also called 7,8-diammoniononanoate) to form a ureido ring. The polypeptide is ATP-dependent dethiobiotin synthetase BioD (Clostridium botulinum (strain Langeland / NCTC 10281 / Type F)).